Consider the following 352-residue polypeptide: Phosphoribosylformylglycinamidine cyclo-ligase (352 aa).

It belongs to the AIR synthase family.

The protein resides in the cytoplasm. It catalyses the reaction 2-formamido-N(1)-(5-O-phospho-beta-D-ribosyl)acetamidine + ATP = 5-amino-1-(5-phospho-beta-D-ribosyl)imidazole + ADP + phosphate + H(+). Its pathway is purine metabolism; IMP biosynthesis via de novo pathway; 5-amino-1-(5-phospho-D-ribosyl)imidazole from N(2)-formyl-N(1)-(5-phospho-D-ribosyl)glycinamide: step 2/2. This chain is Phosphoribosylformylglycinamidine cyclo-ligase, found in Pseudomonas putida (strain W619).